We begin with the raw amino-acid sequence, 904 residues long: Envelope glycoprotein B (904 aa).

Positions 1-22 (MRGGGLICALVVGALVAAVASA) are cleaved as a signal peptide. Residues 23-771 (APAAPAAPRA…SGVSSFMSNP (749 aa)) lie on the Virion surface side of the membrane. Residues 40-83 (VAANGGPASRPPPVPSPATTKARKRKTKKPPKRPEATPPPDANA) are disordered. A compositionally biased stretch (basic residues) spans 60 to 70 (KARKRKTKKPP). N-linked (GlcNAc...) asparagine; by host glycosylation is found at asparagine 82 and asparagine 136. Cystine bridges form between cysteine 111/cysteine 570, cysteine 128/cysteine 526, cysteine 202/cysteine 266, cysteine 359/cysteine 407, and cysteine 593/cysteine 630. Involved in fusion and/or binding to host membrane regions lie at residues 168-174 (VWFGHRY) and 253-260 (RVEAFHRY). N-linked (GlcNAc...) asparagine; by host glycans are attached at residues asparagine 393, asparagine 425, and asparagine 486. Positions 467 to 490 (QDRKPRNATPAPLREAPSANASVE) are disordered. Asparagine 671 is a glycosylation site (N-linked (GlcNAc...) asparagine; by host). Hydrophobic membrane proximal region stretches follow at residues 716–769 (IDTV…SFMS) and 728–768 (MFAG…SSFM). The chain crosses the membrane as a helical span at residues 772–792 (FGALAVGLLVLAGLVAAFFAF). At 793–904 (RYVLQLQRNP…EDEAGDEDEL (112 aa)) the chain is on the intravirion side. A disordered region spans residues 816–835 (TSDPGGVGGEGEEGAEGGGF). Positions 849-852 (YMAL) match the Golgi targeting motif. The tract at residues 883-904 (KRNKARYSPLHNEDEAGDEDEL) is disordered. The Internalization motif motif lies at 889 to 892 (YSPL).

This sequence belongs to the herpesviridae glycoprotein B family. As to quaternary structure, homotrimer; disulfide-linked. Binds to heparan sulfate proteoglycans. Interacts with gH/gL heterodimer.

The protein localises to the virion membrane. The protein resides in the host cell membrane. Its subcellular location is the host endosome membrane. It localises to the host Golgi apparatus membrane. Functionally, envelope glycoprotein that forms spikes at the surface of virion envelope. Essential for the initial attachment to heparan sulfate moieties of the host cell surface proteoglycans. Involved in fusion of viral and cellular membranes leading to virus entry into the host cell. Following initial binding to its host receptors, membrane fusion is mediated by the fusion machinery composed at least of gB and the heterodimer gH/gL. May be involved in the fusion between the virion envelope and the outer nuclear membrane during virion egress. This chain is Envelope glycoprotein B, found in Homo sapiens (Human).